Consider the following 499-residue polypeptide: Putative antiporter subunit mnhD2 (499 aa).

The next 14 helical transmembrane spans lie at 1–21 (MSNL…ILVF), 31–51 (ILSI…LIYV), 77–97 (LSLL…AYGF), 107–127 (FHLP…FLTS), 129–149 (LFNL…LVTL), 160–180 (IVYV…IGML), 208–228 (ISLV…FMWL), 239–259 (LAAL…IRFF), 272–292 (TLLV…VIAY), 307–327 (IGFI…GAIF), 329–349 (LAND…LVYM), 367–387 (FFGV…PFSG), 402–422 (GNYI…YSLF), and 449–469 (GLLS…PVVL).

It belongs to the CPA3 antiporters (TC 2.A.63) subunit D family. May form a heterooligomeric complex that consists of seven subunits: mnhA2, mnhB2, mnhC2, mnhD2, mnhE2, mnhF2 and mnhG2.

The protein localises to the cell membrane. The protein is Putative antiporter subunit mnhD2 (mnhD2) of Staphylococcus epidermidis (strain ATCC 35984 / DSM 28319 / BCRC 17069 / CCUG 31568 / BM 3577 / RP62A).